The following is a 477-amino-acid chain: Ribulose bisphosphate carboxylase large chain (477 aa).

Residues 1-2 (MS) constitute a propeptide that is removed on maturation. Pro-3 is subject to N-acetylproline. Substrate-binding residues include Asn-123 and Thr-173. Lys-175 acts as the Proton acceptor in catalysis. Lys-177 contributes to the substrate binding site. Lys-201, Asp-203, and Glu-204 together coordinate Mg(2+). Position 201 is an N6-carboxylysine (Lys-201). The Proton acceptor role is filled by His-294. Positions 295, 327, and 379 each coordinate substrate.

Belongs to the RuBisCO large chain family. Type I subfamily. Heterohexadecamer of 8 large chains and 8 small chains; disulfide-linked. The disulfide link is formed within the large subunit homodimers. It depends on Mg(2+) as a cofactor. Post-translationally, the disulfide bond which can form in the large chain dimeric partners within the hexadecamer appears to be associated with oxidative stress and protein turnover.

It is found in the plastid. The protein localises to the chloroplast. It carries out the reaction 2 (2R)-3-phosphoglycerate + 2 H(+) = D-ribulose 1,5-bisphosphate + CO2 + H2O. It catalyses the reaction D-ribulose 1,5-bisphosphate + O2 = 2-phosphoglycolate + (2R)-3-phosphoglycerate + 2 H(+). In terms of biological role, ruBisCO catalyzes two reactions: the carboxylation of D-ribulose 1,5-bisphosphate, the primary event in carbon dioxide fixation, as well as the oxidative fragmentation of the pentose substrate in the photorespiration process. Both reactions occur simultaneously and in competition at the same active site. This Lolium perenne (Perennial ryegrass) protein is Ribulose bisphosphate carboxylase large chain.